Consider the following 309-residue polypeptide: Transcription elongation factor S-II (309 aa).

The region spanning 5–79 (EVLVHVKNLE…SSWKDAINKN (75 aa)) is the TFIIS N-terminal domain. Residues 78–142 (KNKRSRQAQQ…NSKNDGVDTA (65 aa)) form a disordered region. Residues 88 to 102 (HHQDHAPGNAEDKTT) show a composition bias toward basic and acidic residues. A compositionally biased stretch (polar residues) spans 103–120 (VGESVNGVQQPASSQSDA). Ser116 is modified (phosphoserine). One can recognise a TFIIS central domain in the interval 148 to 264 (LRDQVLKALY…NAQGATIERS (117 aa)). Residues 267-307 (DRFTCGKCKEKKVSYYQLQTRSADEPLTTFCTCEACGNRWK) form a TFIIS-type zinc finger. Residues Cys271, Cys274, Cys299, and Cys302 each contribute to the Zn(2+) site.

This sequence belongs to the TFS-II family.

It is found in the nucleus. In terms of biological role, necessary for efficient RNA polymerase II transcription elongation past template-encoded arresting sites. The arresting sites in DNA have the property of trapping a certain fraction of elongating RNA polymerases that pass through, resulting in locked ternary complexes. Cleavage of the nascent transcript by S-II allows the resumption of elongation from the new 3'-terminus. Can promote the transfer of one strand of a double-stranded DNA molecule to a homologous single strand and thus may be involved in recombination. This Saccharomyces cerevisiae (strain ATCC 204508 / S288c) (Baker's yeast) protein is Transcription elongation factor S-II (DST1).